Reading from the N-terminus, the 275-residue chain is Elongation factor Ts (275 aa).

The segment at 80–83 (TDFV) is involved in Mg(2+) ion dislocation from EF-Tu.

The protein belongs to the EF-Ts family.

The protein localises to the cytoplasm. Its function is as follows. Associates with the EF-Tu.GDP complex and induces the exchange of GDP to GTP. It remains bound to the aminoacyl-tRNA.EF-Tu.GTP complex up to the GTP hydrolysis stage on the ribosome. This chain is Elongation factor Ts, found in Kineococcus radiotolerans (strain ATCC BAA-149 / DSM 14245 / SRS30216).